The following is a 347-amino-acid chain: Tsukushi (347 aa).

Positions 1 to 19 are cleaved as a signal peptide; sequence MASLLCLFFSLLGLAAIGA. The LRRNT domain maps to 20 to 61; sequence VKNCHPQCRCEVETFGLFDSFSLTKVDCSRIGPGNTPVPIPL. LRR repeat units lie at residues 62–83, 88–109, 112–133, 135–156, 160–175, 185–205, 206–227, 230–252, 255–277, and 280–301; these read DTSH…MLSG, TLVS…AFSK, YLET…CFTG, PLVE…LFTT, DLPI…LTSI, YIKS…LNGI, PLQY…AFDS, ELVH…AFRS, NLQA…VFSG, and SLQE…VFMQ. Asparagine 285 carries an N-linked (GlcNAc...) asparagine glycan.

As to quaternary structure, forms a ternary complex with chordin/CHRD and BMP4.

It is found in the secreted. In terms of biological role, contributes to various developmental events through its interactions with multiple signaling pathways. Dorsalizing factor which functions as an inhibitor of bone morphogenetic proteins during gastrulation. This Danio rerio (Zebrafish) protein is Tsukushi (tsku).